Consider the following 410-residue polypeptide: Elongation factor Tu (410 aa).

The tr-type G domain occupies 10–214 (KPHVNIGTIG…EVDAYIPTPE (205 aa)). Residues 19 to 26 (GHVDHGKT) form a G1 region. 19–26 (GHVDHGKT) lines the GTP pocket. Position 26 (T26) interacts with Mg(2+). A G2 region spans residues 60–64 (GITIN). The segment at 81-84 (DCPG) is G3. GTP is bound by residues 81-85 (DCPGH) and 136-139 (NKAD). The interval 136-139 (NKAD) is G4. The tract at residues 174–176 (SAL) is G5.

This sequence belongs to the TRAFAC class translation factor GTPase superfamily. Classic translation factor GTPase family. EF-Tu/EF-1A subfamily. In terms of assembly, monomer.

It is found in the cytoplasm. The enzyme catalyses GTP + H2O = GDP + phosphate + H(+). Its function is as follows. GTP hydrolase that promotes the GTP-dependent binding of aminoacyl-tRNA to the A-site of ribosomes during protein biosynthesis. The polypeptide is Elongation factor Tu (Arthrospira platensis (Spirulina platensis)).